The sequence spans 352 residues: Enhancer of mRNA-decapping protein 1 (352 aa).

Disordered stretches follow at residues 1–258 (MMAH…PRNH) and 277–352 (QYPQ…SSKS). Low complexity predominate over residues 71-80 (HTSSNTSNNK). 2 stretches are compositionally biased toward polar residues: residues 93 to 104 (NFGNESSHQNGG) and 205 to 225 (TEPN…SVNV). Residues 289 to 309 (GGVYPMVAPQYQQQPQQHPQQ) are compositionally biased toward low complexity.

Belongs to the EDC family.

Its subcellular location is the cytoplasm. MRNA-binding protein which stimulates mRNA decapping. This Debaryomyces hansenii (strain ATCC 36239 / CBS 767 / BCRC 21394 / JCM 1990 / NBRC 0083 / IGC 2968) (Yeast) protein is Enhancer of mRNA-decapping protein 1 (EDC1).